Consider the following 1445-residue polypeptide: 3'-5' RNA helicase YTHDC2 (1445 aa).

Positions 1–50 are disordered; sequence MSRPSSVSPRPPAPSGGGTGGGGGGSGGGGGGGGGGPASCGPGGGGRAKG. The span at 15–48 shows a compositional bias: gly residues; that stretch reads SGGGTGGGGGGSGGGGGGGGGGPASCGPGGGGRA. Residues 53–121 enclose the R3H domain; sequence DIRIDEEVKI…NRYLTVKKKD (69 aa). In terms of domain architecture, Helicase ATP-binding spans 218–384; that stretch reads VKIIKENKVV…FGSCPVIYIQ (167 aa). 231-238 is an ATP binding site; sequence GETGSGKT. The DEAH box motif lies at 331–334; that stretch reads DEVH. ANK repeat units lie at residues 521–553 and 554–586; these read TSAT…SKAS and NGWM…FGNL. The 173-residue stretch at 627 to 799 folds into the Helicase C-terminal domain; sequence LLYNICHSCD…ELCLHTKLLA (173 aa). Ser-1104, Ser-1105, and Ser-1107 each carry phosphoserine. Polar residues predominate over residues 1179 to 1189; the sequence is EQSAGLQQPSG. The disordered stretch occupies residues 1179–1303; that stretch reads EQSAGLQQPS…SPSPRPNMPI (125 aa). Residues 1246–1264 are compositionally biased toward basic and acidic residues; sequence KYKDRGILHPKRSTDDRSD. Residues 1265-1279 are compositionally biased toward low complexity; the sequence is QSSVKSTDSSSYPSP. Ser-1278, Ser-1282, and Ser-1296 each carry phosphoserine. Positions 1303-1433 constitute a YTH domain; the sequence is IRYFIMKSSN…QVGEQLLQLW (131 aa). RNA is bound by residues 1309–1311, Trp-1325, and Trp-1375; that span reads KSS.

This sequence belongs to the DEAD box helicase family. DEAH subfamily. As to quaternary structure, interacts with MEIOC; binds transcripts that regulate the mitotic cell cycle inhibiting progression into metaphase, thereby allowing meiotic prophase to proceed normally. Interacts (via ANK repeats) with XRN1. Interacts with ZCCHC4. Associates with the small ribosomal subunit. Interacts with RBM46. As to expression, present in male and female germ cells (at protein level). Highly expressed in testis. Not detected in spermatogonia next to the tubule wall but is strongly expressed in spermatocytes, suggesting that it is up-regulated in germ cells upon entry into meiosis (at protein level).

Its subcellular location is the cytoplasm. The protein localises to the perinuclear region. The catalysed reaction is ATP + H2O = ADP + phosphate + H(+). In terms of biological role, 3'-5' RNA helicase that plays a key role in the male and female germline by promoting transition from mitotic to meiotic divisions in stem cells. Specifically recognizes and binds N6-methyladenosine (m6A)-containing RNAs, a modification present at internal sites of mRNAs and some non-coding RNAs that plays a role in the efficiency of RNA processing and stability. Essential for ensuring a successful progression of the meiotic program in the germline by regulating the level of m6A-containing RNAs. Acts by binding and promoting degradation of m6A-containing mRNAs: the 3'-5' RNA helicase activity is required for this process and RNA degradation may be mediated by XRN1 exoribonuclease. Required for both spermatogenesis and oogenesis. The sequence is that of 3'-5' RNA helicase YTHDC2 from Mus musculus (Mouse).